A 130-amino-acid polypeptide reads, in one-letter code: ESAT-6 secretion system extracellular protein C (130 aa).

The protein belongs to the EsxC family.

Its subcellular location is the secreted. The sequence is that of ESAT-6 secretion system extracellular protein C from Staphylococcus aureus (strain MSSA476).